Reading from the N-terminus, the 356-residue chain is Chaperone protein DnaJ (356 aa).

The region spanning 5–69 (DYYQILGVSK…ERRKEYDRIL (65 aa)) is the J domain. Residues 121-197 (GCEKDIEYER…CSGRGRVAMH (77 aa)) form a CR-type zinc finger. Residues C134, C137, C151, C154, C171, C174, C185, and C188 each contribute to the Zn(2+) site. CXXCXGXG motif repeat units follow at residues 134 to 141 (CPTCEGKG), 151 to 158 (CHACEGTG), 171 to 178 (CSVCKGRG), and 185 to 192 (CPACSGRG).

Belongs to the DnaJ family. As to quaternary structure, homodimer. Zn(2+) serves as cofactor.

It is found in the cytoplasm. Its function is as follows. Participates actively in the response to hyperosmotic and heat shock by preventing the aggregation of stress-denatured proteins and by disaggregating proteins, also in an autonomous, DnaK-independent fashion. Unfolded proteins bind initially to DnaJ; upon interaction with the DnaJ-bound protein, DnaK hydrolyzes its bound ATP, resulting in the formation of a stable complex. GrpE releases ADP from DnaK; ATP binding to DnaK triggers the release of the substrate protein, thus completing the reaction cycle. Several rounds of ATP-dependent interactions between DnaJ, DnaK and GrpE are required for fully efficient folding. Also involved, together with DnaK and GrpE, in the DNA replication of plasmids through activation of initiation proteins. The polypeptide is Chaperone protein DnaJ (Hydrogenobacter thermophilus (strain DSM 6534 / IAM 12695 / TK-6)).